We begin with the raw amino-acid sequence, 310 residues long: Malate dehydrogenase (310 aa).

Residues 7 to 13 (GAAGGIG) and aspartate 34 each bind NAD(+). Substrate contacts are provided by arginine 81 and arginine 87. Residues asparagine 94 and 117–119 (ITN) each bind NAD(+). Substrate is bound by residues asparagine 119 and arginine 153. Catalysis depends on histidine 177, which acts as the Proton acceptor. Methionine 227 contributes to the NAD(+) binding site.

It belongs to the LDH/MDH superfamily. MDH type 1 family. Homodimer.

The enzyme catalyses (S)-malate + NAD(+) = oxaloacetate + NADH + H(+). In terms of biological role, catalyzes the reversible oxidation of malate to oxaloacetate. This chain is Malate dehydrogenase, found in Pseudoalteromonas translucida (strain TAC 125).